The following is a 483-amino-acid chain: Scarecrow-like protein 26 (483 aa).

The GRAS domain occupies 95–477 (KTDESKGLRL…RRLVSASFWA (383 aa)). A leucine repeat I (LRI) region spans residues 102–165 (LRLVHLLVAA…SKLLERDSVL (64 aa)). The VHIID stretch occupies residues 184 to 251 (FELLQNMSPY…PSAQHLRITA (68 aa)). The VHIID signature appears at 215 to 219 (IHIVD). The leucine repeat II (LRII) stretch occupies residues 267–299 (ETGRRLTAFADSIGQPFSYQHCKLDTNAFSTSS). The interval 308 to 400 (VVINCMLHLP…RVFIGPWVAN (93 aa)) is PFYRE. The tract at residues 403–477 (TRITANDAEV…RRLVSASFWA (75 aa)) is SAW.

It belongs to the GRAS family. As to expression, expressed in seedlings, roots, leaves and flowers.

The protein localises to the nucleus. Its function is as follows. Probable transcription factor involved in plant development. The sequence is that of Scarecrow-like protein 26 (SCL26) from Arabidopsis thaliana (Mouse-ear cress).